The primary structure comprises 116 residues: NADH-ubiquinone oxidoreductase chain 3 (116 aa).

3 consecutive transmembrane segments (helical) span residues 10–30, 64–84, and 88–108; these read FLTL…TFAA, FFLV…LFPL, and VFFH…FEWV.

Belongs to the complex I subunit 3 family.

The protein resides in the mitochondrion membrane. The catalysed reaction is a ubiquinone + NADH + 5 H(+)(in) = a ubiquinol + NAD(+) + 4 H(+)(out). Core subunit of the mitochondrial membrane respiratory chain NADH dehydrogenase (Complex I) that is believed to belong to the minimal assembly required for catalysis. Complex I functions in the transfer of electrons from NADH to the respiratory chain. The immediate electron acceptor for the enzyme is believed to be ubiquinone. The protein is NADH-ubiquinone oxidoreductase chain 3 (ND3) of Patiria pectinifera (Starfish).